The sequence spans 460 residues: tRNA modification GTPase MnmE (460 aa).

(6S)-5-formyl-5,6,7,8-tetrahydrofolate-binding residues include arginine 24, glutamate 81, and lysine 121. The TrmE-type G domain occupies glycine 218–alanine 384. GTP is bound by residues asparagine 228–threonine 233, serine 247–threonine 253, and aspartate 272–glycine 275. Residues serine 232 and threonine 253 each contribute to the Mg(2+) site. Lysine 460 contacts (6S)-5-formyl-5,6,7,8-tetrahydrofolate.

Belongs to the TRAFAC class TrmE-Era-EngA-EngB-Septin-like GTPase superfamily. TrmE GTPase family. Homodimer. Heterotetramer of two MnmE and two MnmG subunits. The cofactor is K(+).

It localises to the cytoplasm. Functionally, exhibits a very high intrinsic GTPase hydrolysis rate. Involved in the addition of a carboxymethylaminomethyl (cmnm) group at the wobble position (U34) of certain tRNAs, forming tRNA-cmnm(5)s(2)U34. This chain is tRNA modification GTPase MnmE, found in Rhodopseudomonas palustris (strain HaA2).